The sequence spans 273 residues: Large ribosomal subunit protein uL2cz/uL2cy (273 aa).

2 disordered regions span residues 1–25 (MAKH…VKSN) and 225–253 (PVDH…YPAL).

It belongs to the universal ribosomal protein uL2 family. In terms of assembly, part of the 50S ribosomal subunit.

The protein localises to the plastid. It is found in the chloroplast. This Triticum aestivum (Wheat) protein is Large ribosomal subunit protein uL2cz/uL2cy (rpl2-A).